A 172-amino-acid chain; its full sequence is Shikimate kinase (172 aa).

Position 11–16 (11–16 (GAGKST)) interacts with ATP. Serine 15 contacts Mg(2+). Substrate is bound by residues aspartate 33, arginine 57, and glycine 79. Arginine 117 is an ATP binding site. Arginine 136 is a binding site for substrate. Arginine 153 is a binding site for ATP.

The protein belongs to the shikimate kinase family. As to quaternary structure, monomer. Mg(2+) serves as cofactor.

The protein resides in the cytoplasm. It carries out the reaction shikimate + ATP = 3-phosphoshikimate + ADP + H(+). It functions in the pathway metabolic intermediate biosynthesis; chorismate biosynthesis; chorismate from D-erythrose 4-phosphate and phosphoenolpyruvate: step 5/7. Functionally, catalyzes the specific phosphorylation of the 3-hydroxyl group of shikimic acid using ATP as a cosubstrate. The protein is Shikimate kinase of Pseudomonas putida (strain ATCC 700007 / DSM 6899 / JCM 31910 / BCRC 17059 / LMG 24140 / F1).